We begin with the raw amino-acid sequence, 302 residues long: Ribosomal RNA small subunit methyltransferase H (302 aa).

S-adenosyl-L-methionine contacts are provided by residues 36–38, D56, F84, D99, and Q106; that span reads GGH.

This sequence belongs to the methyltransferase superfamily. RsmH family.

The protein resides in the cytoplasm. The catalysed reaction is cytidine(1402) in 16S rRNA + S-adenosyl-L-methionine = N(4)-methylcytidine(1402) in 16S rRNA + S-adenosyl-L-homocysteine + H(+). In terms of biological role, specifically methylates the N4 position of cytidine in position 1402 (C1402) of 16S rRNA. The polypeptide is Ribosomal RNA small subunit methyltransferase H (Christiangramia forsetii (strain DSM 17595 / CGMCC 1.15422 / KT0803) (Gramella forsetii)).